Reading from the N-terminus, the 447-residue chain is Tubulin beta-4 chain (447 aa).

Residues glutamine 11, glutamate 69, serine 138, glycine 142, threonine 143, glycine 144, asparagine 204, and asparagine 226 each contribute to the GTP site. Glutamate 69 lines the Mg(2+) pocket. Residues glutamine 423–methionine 447 are disordered. Residues threonine 429 to methionine 447 are compositionally biased toward acidic residues.

Belongs to the tubulin family. In terms of assembly, dimer of alpha and beta chains. A typical microtubule is a hollow water-filled tube with an outer diameter of 25 nm and an inner diameter of 15 nM. Alpha-beta heterodimers associate head-to-tail to form protofilaments running lengthwise along the microtubule wall with the beta-tubulin subunit facing the microtubule plus end conferring a structural polarity. Microtubules usually have 13 protofilaments but different protofilament numbers can be found in some organisms and specialized cells. Mg(2+) is required as a cofactor. In terms of tissue distribution, expressed in roots and leaf sheaths.

The protein localises to the cytoplasm. It is found in the cytoskeleton. Its function is as follows. Tubulin is the major constituent of microtubules, a cylinder consisting of laterally associated linear protofilaments composed of alpha- and beta-tubulin heterodimers. Microtubules grow by the addition of GTP-tubulin dimers to the microtubule end, where a stabilizing cap forms. Below the cap, tubulin dimers are in GDP-bound state, owing to GTPase activity of alpha-tubulin. The chain is Tubulin beta-4 chain (TUBB4) from Oryza sativa subsp. japonica (Rice).